Reading from the N-terminus, the 98-residue chain is NADH-ubiquinone oxidoreductase chain 4L (98 aa).

Helical transmembrane passes span 2-22 (PSIS…MLVF), 29-49 (SLLC…LFIM), and 61-81 (ILLL…LVMV).

The protein belongs to the complex I subunit 4L family. As to quaternary structure, core subunit of respiratory chain NADH dehydrogenase (Complex I) which is composed of 45 different subunits.

It localises to the mitochondrion inner membrane. It carries out the reaction a ubiquinone + NADH + 5 H(+)(in) = a ubiquinol + NAD(+) + 4 H(+)(out). Core subunit of the mitochondrial membrane respiratory chain NADH dehydrogenase (Complex I) which catalyzes electron transfer from NADH through the respiratory chain, using ubiquinone as an electron acceptor. Part of the enzyme membrane arm which is embedded in the lipid bilayer and involved in proton translocation. This chain is NADH-ubiquinone oxidoreductase chain 4L (MT-ND4L), found in Lepilemur mitsinjoensis (Mitsinjo sportive lemur).